The primary structure comprises 60 residues: Large ribosomal subunit protein bL32 (60 aa).

Belongs to the bacterial ribosomal protein bL32 family.

In Persephonella marina (strain DSM 14350 / EX-H1), this protein is Large ribosomal subunit protein bL32.